Reading from the N-terminus, the 224-residue chain is dTTP/UTP pyrophosphatase (224 aa).

The active-site Proton acceptor is Asp77.

It belongs to the Maf family. YhdE subfamily. A divalent metal cation is required as a cofactor.

The protein localises to the cytoplasm. It catalyses the reaction dTTP + H2O = dTMP + diphosphate + H(+). It carries out the reaction UTP + H2O = UMP + diphosphate + H(+). Nucleoside triphosphate pyrophosphatase that hydrolyzes dTTP and UTP. May have a dual role in cell division arrest and in preventing the incorporation of modified nucleotides into cellular nucleic acids. The sequence is that of dTTP/UTP pyrophosphatase from Dehalococcoides mccartyi (strain ATCC BAA-2100 / JCM 16839 / KCTC 5957 / BAV1).